A 680-amino-acid chain; its full sequence is PAN2-PAN3 deadenylation complex subunit PAN3 (680 aa).

3 disordered regions span residues 1–26 (MATT…RADT), 51–87 (HDQT…SKKT), and 99–120 (FTPR…TDIP). The C3H1-type zinc finger occupies 25 to 54 (DTKDTLCRNILIYGHCRYEDAGCAFNHDQT). The segment covering 52 to 64 (DQTKKSPKPDATT) has biased composition (basic and acidic residues). The short motif at 62-82 (ATTRKTLNVDSAPFTPAVSSQ) is the PABPC-interacting motif-2 (PAM-2) element. Residues 99-117 (FTPRATAATPTGTPTAQET) show a composition bias toward low complexity. The tract at residues 256 to 522 (QTMTGTAALQ…TVKNLVAGIN (267 aa)) is pseudokinase domain. ATP is bound by residues R311, 360–367 (EYYPLAET), and 422–423 (TK). Positions 523-561 (EHVMTAFDAQQRQSDMLYSELYREVENGRVLRLLMKLAT) form a coiled coil. Positions 562 to 680 (INERTEYDKD…VHHPSHRDRF (119 aa)) are knob domain. Positions 655-669 (SGNGRGGPVASGSGH) are enriched in gly residues. The interval 655 to 680 (SGNGRGGPVASGSGHGVHHPSHRDRF) is disordered. Basic residues predominate over residues 670-680 (GVHHPSHRDRF).

It belongs to the protein kinase superfamily. PAN3 family. In terms of assembly, homodimer. Forms a heterotrimer with a catalytic subunit PAN2 to form the poly(A)-nuclease (PAN) deadenylation complex. Interacts (via PAM-2 motif) with poly(A)-binding protein PAB1 (via PABC domain), conferring substrate specificity of the enzyme complex.

It is found in the cytoplasm. Regulatory subunit of the poly(A)-nuclease (PAN) deadenylation complex, one of two cytoplasmic mRNA deadenylases involved in mRNA turnover. PAN specifically shortens poly(A) tails of RNA and the activity is stimulated by poly(A)-binding protein PAB1. PAN deadenylation is followed by rapid degradation of the shortened mRNA tails by the CCR4-NOT complex. Deadenylated mRNAs are then degraded by two alternative mechanisms, namely exosome-mediated 3'-5' exonucleolytic degradation, or deadenylation-dependent mRNA decaping and subsequent 5'-3' exonucleolytic degradation by XRN1. May also be involved in post-transcriptional maturation of mRNA poly(A) tails. PAN3 acts as a positive regulator for PAN activity, recruiting the catalytic subunit PAN2 to mRNA via its interaction with RNA and with PAB1. This chain is PAN2-PAN3 deadenylation complex subunit PAN3, found in Pyricularia oryzae (strain 70-15 / ATCC MYA-4617 / FGSC 8958) (Rice blast fungus).